A 78-amino-acid polypeptide reads, in one-letter code: Small ribosomal subunit protein bS18 (78 aa).

This sequence belongs to the bacterial ribosomal protein bS18 family. In terms of assembly, part of the 30S ribosomal subunit. Forms a tight heterodimer with protein bS6.

In terms of biological role, binds as a heterodimer with protein bS6 to the central domain of the 16S rRNA, where it helps stabilize the platform of the 30S subunit. The sequence is that of Small ribosomal subunit protein bS18 from Lactobacillus acidophilus (strain ATCC 700396 / NCK56 / N2 / NCFM).